An 89-amino-acid chain; its full sequence is Gibberellin-regulated protein 10 (89 aa).

The signal sequence occupies residues 1–25 (MKFPAVKVLIISLLITSSLFILSTA).

The protein belongs to the GASA family. In terms of processing, six disulfide bonds may be present. As to expression, expressed in vasculature of rosette leaves and roots, cotyledon and root tips and developing seeds.

The protein resides in the secreted. Its function is as follows. Gibberellin-regulated protein that may function in hormonal controlled steps of development such as seed germination, flowering and seed maturation. This Arabidopsis thaliana (Mouse-ear cress) protein is Gibberellin-regulated protein 10 (GASA10).